The following is a 51-amino-acid chain: Large ribosomal subunit protein eL39 (51 aa).

This sequence belongs to the eukaryotic ribosomal protein eL39 family. As to quaternary structure, part of the 50S ribosomal subunit.

The protein is Large ribosomal subunit protein eL39 of Thermococcus kodakarensis (strain ATCC BAA-918 / JCM 12380 / KOD1) (Pyrococcus kodakaraensis (strain KOD1)).